The sequence spans 251 residues: Long-distance movement protein (251 aa).

The interval 25 to 134 (SGKSCNSGGA…VAQPQQRWAK (110 aa)) is disordered. The Nuclear localization signal signature appears at 108 to 122 (RPRRRAGRSGGMDPR). The Nuclear export signal signature appears at 149-153 (LPSLL).

As to quaternary structure, homooligomer. Interacts with host FIB2; this interaction, is required for ORF3 protein transiting through host Cajal body and nucleolus, relocalization of fibrillarin to the cytoplasm, and in presence of viral RNA, leads to the formation of stable RNPs.

It localises to the host cytoplasm. The protein resides in the host nucleus. It is found in the host nucleolus. In terms of biological role, protects and provides long-distance movement to viral RNA. Self associates and binds viral RNA and fibrillarin to form filamentous ribonucleoproteins (RNPs) protected from RNase. ORF3 protein actually fulfills functions that are usually provided by capsid protein, which is absent from umbraviruses' genome. The polypeptide is Long-distance movement protein (ORF3) (Clitoria (Hyacinth bean)).